A 101-amino-acid chain; its full sequence is NADH-quinone oxidoreductase subunit K (101 aa).

3 consecutive transmembrane segments (helical) span residues 4–24 (VYDYLVLGVILFGLSLVGIML), 29–49 (IILLLVCVELMLLAVNTNFIA), and 61–81 (VFVFFILTVAAAEAAIGLAIV).

The protein belongs to the complex I subunit 4L family. NDH-1 is composed of 14 different subunits. Subunits NuoA, H, J, K, L, M, N constitute the membrane sector of the complex.

It is found in the cell inner membrane. The catalysed reaction is a quinone + NADH + 5 H(+)(in) = a quinol + NAD(+) + 4 H(+)(out). Functionally, NDH-1 shuttles electrons from NADH, via FMN and iron-sulfur (Fe-S) centers, to quinones in the respiratory chain. The immediate electron acceptor for the enzyme in this species is believed to be ubiquinone. Couples the redox reaction to proton translocation (for every two electrons transferred, four hydrogen ions are translocated across the cytoplasmic membrane), and thus conserves the redox energy in a proton gradient. The sequence is that of NADH-quinone oxidoreductase subunit K from Legionella pneumophila (strain Paris).